The chain runs to 157 residues: 2-C-methyl-D-erythritol 2,4-cyclodiphosphate synthase (157 aa).

The a divalent metal cation site is built by D8 and H10. 4-CDP-2-C-methyl-D-erythritol 2-phosphate is bound by residues 8-10 (DVH) and 34-35 (HS). Residue H42 coordinates a divalent metal cation. 4-CDP-2-C-methyl-D-erythritol 2-phosphate-binding positions include 56–58 (DIG), 61–65 (FPDTD), 100–106 (AQAPKMA), 132–135 (TTTE), F139, and R142.

It belongs to the IspF family. Homotrimer. Requires a divalent metal cation as cofactor.

It carries out the reaction 4-CDP-2-C-methyl-D-erythritol 2-phosphate = 2-C-methyl-D-erythritol 2,4-cyclic diphosphate + CMP. It functions in the pathway isoprenoid biosynthesis; isopentenyl diphosphate biosynthesis via DXP pathway; isopentenyl diphosphate from 1-deoxy-D-xylulose 5-phosphate: step 4/6. Its function is as follows. Involved in the biosynthesis of isopentenyl diphosphate (IPP) and dimethylallyl diphosphate (DMAPP), two major building blocks of isoprenoid compounds. Catalyzes the conversion of 4-diphosphocytidyl-2-C-methyl-D-erythritol 2-phosphate (CDP-ME2P) to 2-C-methyl-D-erythritol 2,4-cyclodiphosphate (ME-CPP) with a corresponding release of cytidine 5-monophosphate (CMP). In Azotobacter vinelandii (strain DJ / ATCC BAA-1303), this protein is 2-C-methyl-D-erythritol 2,4-cyclodiphosphate synthase.